A 232-amino-acid chain; its full sequence is Large ribosomal subunit protein uL1 (232 aa).

Belongs to the universal ribosomal protein uL1 family. Part of the 50S ribosomal subunit.

Functionally, binds directly to 23S rRNA. The L1 stalk is quite mobile in the ribosome, and is involved in E site tRNA release. In terms of biological role, protein L1 is also a translational repressor protein, it controls the translation of the L11 operon by binding to its mRNA. The sequence is that of Large ribosomal subunit protein uL1 from Christiangramia forsetii (strain DSM 17595 / CGMCC 1.15422 / KT0803) (Gramella forsetii).